A 222-amino-acid polypeptide reads, in one-letter code: Sugar fermentation stimulation protein homolog (222 aa).

It belongs to the SfsA family.

This is Sugar fermentation stimulation protein homolog from Thermotoga sp. (strain RQ2).